The primary structure comprises 184 residues: Gremlin-1 (184 aa).

A signal peptide spans 1-24 (MNRTAYTVGALLLLLGTLLPTAEG). Residues 23 to 77 (EGKKKGSQGAIPPPDKAQHNDSEQTQSPPQPGSRTRGRGQGRGTAMPGEEVLESS) are disordered. Asn42 carries an N-linked (GlcNAc...) asparagine glycan. 4 disulfides stabilise this stretch: Cys94-Cys144, Cys108-Cys158, Cys118-Cys176, and Cys122-Cys178. The CTCK domain occupies 94–184 (CKTQPLKQTI…QCRCISIDLD (91 aa)).

This sequence belongs to the DAN family. In terms of assembly, homodimer; can also form homooligomers. Interacts with BMP2; can form higher oligomers with BMP2. Interacts with SLIT1 and SLIT2 in a glycosylation-dependent manner. As to expression, highly expressed in spleen and to a lesser extent in lung, skeletal muscle and kidney. Expressed only in non-transformed cells or primary fibroblasts in culture but not in established transformed or tumor derived cell lines. Broadly expressed in limb bud mesenchyme but restricted to the distal limb bud mesenchyme and concentrated posteriorly. Expressed in ovary especially in granulosa cells of follicles of type 4.

The protein localises to the secreted. In terms of biological role, cytokine that may play an important role during carcinogenesis and metanephric kidney organogenesis, as BMP a antagonist required for early limb outgrowth and patterning in maintaining the FGF4-SHH feedback loop. Down-regulates the BMP4 signaling in a dose-dependent manner. Antagonist of BMP2; inhibits BMP2-mediated differentiation of osteoblasts (in vitro). Acts as inhibitor of monocyte chemotaxis. In Mus musculus (Mouse), this protein is Gremlin-1 (Grem1).